The primary structure comprises 299 residues: tRNA pseudouridine synthase B (299 aa).

The active-site Nucleophile is aspartate 39.

Belongs to the pseudouridine synthase TruB family. Type 1 subfamily.

It carries out the reaction uridine(55) in tRNA = pseudouridine(55) in tRNA. In terms of biological role, responsible for synthesis of pseudouridine from uracil-55 in the psi GC loop of transfer RNAs. The protein is tRNA pseudouridine synthase B of Syntrophomonas wolfei subsp. wolfei (strain DSM 2245B / Goettingen).